A 62-amino-acid chain; its full sequence is Protein YnfQ (62 aa).

Belongs to the YmcF/YnqF peptide family.

In Escherichia coli (strain K12), this protein is Protein YnfQ.